The following is a 261-amino-acid chain: Thiamine thiazole synthase (261 aa).

NAD(+) contacts are provided by residues Ser-40, 59 to 60 (ER), Gly-67, Val-133, and 159 to 161 (HID). Fe cation is bound by residues Asp-161 and His-176. The NAD(+) site is built by Ser-179 and Met-226. Arg-236 contributes to the glycine binding site.

The protein belongs to the THI4 family. As to quaternary structure, homooctamer; tetramer of dimers. It depends on Fe(2+) as a cofactor.

The catalysed reaction is hydrogen sulfide + glycine + NAD(+) = ADP-5-ethyl-4-methylthiazole-2-carboxylate + nicotinamide + 3 H2O + H(+). It participates in cofactor biosynthesis; thiamine diphosphate biosynthesis. Functionally, involved in the biosynthesis of the thiazole moiety of thiamine. Catalyzes the conversion of NAD and glycine to adenosine diphosphate 5-(2-hydroxyethyl)-4-methylthiazole-2-carboxylate (ADT), an adenylated thiazole intermediate, using free sulfide as a source of sulfur. This is Thiamine thiazole synthase from Methanococcus maripaludis (strain C5 / ATCC BAA-1333).